A 425-amino-acid polypeptide reads, in one-letter code: L-lysine N6-monooxygenase (425 aa).

8 to 14 (IGVGTGP) is a binding site for FAD.

The protein belongs to the lysine N(6)-hydroxylase/L-ornithine N(5)-oxygenase family. FAD is required as a cofactor.

Its subcellular location is the cytoplasm. The protein resides in the cell membrane. The catalysed reaction is L-lysine + NADPH + O2 = N(6)-hydroxy-L-lysine + NADP(+) + H2O. The protein operates within siderophore biosynthesis; aerobactin biosynthesis. Its function is as follows. Flavoprotein monooxygenase required for N-hydroxylation of lysine. Involved in the biosynthesis of the siderophore aerobactin which is a chelator that mediates the high-affinity iron transport systems induced by the organism under iron-stressed conditions. This Escherichia coli protein is L-lysine N6-monooxygenase.